The primary structure comprises 317 residues: D-aminoacyl-tRNA deacylase (317 aa).

The protein belongs to the DtdA deacylase family. It depends on Zn(2+) as a cofactor. In terms of tissue distribution, ubiquitous.

It is found in the nucleus. The protein localises to the cytoplasm. The catalysed reaction is a D-aminoacyl-tRNA + H2O = a tRNA + a D-alpha-amino acid + H(+). It carries out the reaction glycyl-tRNA(Ala) + H2O = tRNA(Ala) + glycine + H(+). In terms of biological role, hydrolyzes D-aminoacyl-tRNA into D-amino acid and free tRNA. Broad specificity toward the amino acid, but strict specificity toward the D-isomer. Seems to be required for ethanol tolerance. The sequence is that of D-aminoacyl-tRNA deacylase (GEK1) from Arabidopsis thaliana (Mouse-ear cress).